Reading from the N-terminus, the 321-residue chain is tRNA uridine(34) hydroxylase (321 aa).

The 99-residue stretch at 135–233 folds into the Rhodanese domain; sequence DDPLTLVIDT…YLEEVPENES (99 aa). Cysteine 193 functions as the Cysteine persulfide intermediate in the catalytic mechanism.

It belongs to the TrhO family.

It catalyses the reaction uridine(34) in tRNA + AH2 + O2 = 5-hydroxyuridine(34) in tRNA + A + H2O. Functionally, catalyzes oxygen-dependent 5-hydroxyuridine (ho5U) modification at position 34 in tRNAs. This Prochlorococcus marinus (strain SARG / CCMP1375 / SS120) protein is tRNA uridine(34) hydroxylase.